Here is a 456-residue protein sequence, read N- to C-terminus: RuvB-like 1 (456 aa).

A Glycyl lysine isopeptide (Lys-Gly) (interchain with G-Cter in SUMO2) cross-link involves residue lysine 2. 70–77 contacts ATP; sequence GPPGTGKT. Lysine 225 is covalently cross-linked (Glycyl lysine isopeptide (Lys-Gly) (interchain with G-Cter in SUMO1); alternate). Residue lysine 225 forms a Glycyl lysine isopeptide (Lys-Gly) (interchain with G-Cter in SUMO2); alternate linkage. Lysine 445 participates in a covalent cross-link: Glycyl lysine isopeptide (Lys-Gly) (interchain with G-Cter in SUMO2). Lysine 453 is modified (N6-acetyllysine).

It belongs to the RuvB family. As to quaternary structure, forms homohexameric rings. Can form a dodecamer with RUVBL2 made of two stacked hexameric rings; however, even though RUVBL1 and RUVBL2 are present in equimolar ratio, the oligomeric status of each hexamer is not known. Oligomerization may regulate binding to nucleic acids and conversely, binding to nucleic acids may affect the dodecameric assembly. Interaction of the complex with DHX34 results in conformational changes of the N-terminus of the RUVBL2 subunits, resulting in loss of nucleotide binding ability and ATP hydrolysis of the complex. Interacts with the transcriptional activation domain of MYC. Component of the RNA polymerase II holoenzyme complex. May also act to bridge the LEF1/TCF1-CTNNB1 complex and TBP. Component of the NuA4 histone acetyltransferase complex which contains the catalytic subunit KAT5/TIP60 and the subunits EP400, TRRAP/PAF400, BRD8/SMAP, EPC1, DMAP1/DNMAP1, RUVBL1/TIP49, RUVBL2, ING3, actin, ACTL6A/BAF53A, MORF4L1/MRG15, MORF4L2/MRGX, MRGBP, YEATS4/GAS41, VPS72/YL1 and MEAF6. The NuA4 complex interacts with MYC and the adenovirus E1A protein. RUVBL1 interacts with EP400. Component of a NuA4-related complex which contains EP400, TRRAP/PAF400, SRCAP, BRD8/SMAP, EPC1, DMAP1/DNMAP1, RUVBL1/TIP49, RUVBL2, actin, ACTL6A/BAF53A, VPS72 and YEATS4/GAS41. Component of the BAF53 complex, at least composed of ACTL6A/BAF53A, RUVBL1/TIP49, SMARCA2/BRM, and TRRAP/PAF400. Component of some MLL1/MLL complex, at least composed of the core components KMT2A/MLL1, ASH2L, HCFC1/HCF1, WDR5 and RBBP5, as well as the facultative components BACC1, CHD8, E2F6, HSP70, INO80C, KANSL1, LAS1L, MAX, MCRS1, MGA, MYST1/MOF, PELP1, PHF20, PRP31, RING2, RUVB1/TIP49A, RUVB2/TIP49B, SENP3, TAF1, TAF4, TAF6, TAF7, TAF9 and TEX10. Associates with alpha and gamma tubulins, particularly during metaphase and early anaphase. Interacts with NPAT. Component of the chromatin-remodeling INO80 complex; specifically part of a complex module associated with the helicase ATP-binding and the helicase C-terminal domain of INO80. Interacts with IGHMBP2. Interacts with OFD1. Interacts with HINT1. Component of a complex with USP49 and PSMC5. Component of a SWR1-like complex. Component of the R2TP complex composed at least of RUVBL1, RUVBL2, RPAP3 and PIHD1. Component of the PAQosome complex which is responsible for the biogenesis of several protein complexes and which consists of R2TP complex members RUVBL1, RUVBL2, RPAP3 and PIH1D1, URI complex members PFDN2, PFDN6, PDRG1, UXT and URI1 as well as ASDURF, POLR2E and DNAAF10/WDR92. Interacts with PIH1D1. Interacts with ITFG1. Interacts with WAC; WAC positively regulates MTOR activity by promoting the assembly of the TTT complex composed of TELO2, TTI1 and TTI2 and the RUVBL complex composed of RUVBL1 and RUVBL2 into the TTT-RUVBL complex which leads to the dimerization of the mTORC1 complex and its subsequent activation. The RUVBL1/RUVBL2 complex interacts with ZNHIT1 (via HIT-type zinc finger), ZNHIT3 (via HIT-type zinc finger), ZNHIT6 (via HIT-type zinc finger) and DDX59/ZNHIT5 (via HIT-type zinc finger) in the presence of ADP. Interacts with NOPCHAP1; the interaction is direct and disrupted upon ATP binding. Interacts with SMG1. Interacts with NOP2, NOP56 and NUFIP1. In terms of assembly, (Microbial infection) Interacts with Mumps L polymerase; this interaction regulates the viral transcription. Ubiquitously expressed with high expression in heart, skeletal muscle and testis.

The protein localises to the nucleus matrix. It localises to the nucleus. The protein resides in the nucleoplasm. It is found in the cytoplasm. Its subcellular location is the membrane. The protein localises to the cytoskeleton. It localises to the microtubule organizing center. The protein resides in the centrosome. It is found in the dynein axonemal particle. The catalysed reaction is ATP + H2O = ADP + phosphate + H(+). In terms of biological role, possesses single-stranded DNA-stimulated ATPase and ATP-dependent DNA helicase (3' to 5') activity; hexamerization is thought to be critical for ATP hydrolysis and adjacent subunits in the ring-like structure contribute to the ATPase activity. Component of the NuA4 histone acetyltransferase complex which is involved in transcriptional activation of select genes principally by acetylation of nucleosomal histones H4 and H2A. This modification may both alter nucleosome-DNA interactions and promote interaction of the modified histones with other proteins which positively regulate transcription. This complex may be required for the activation of transcriptional programs associated with oncogene and proto-oncogene mediated growth induction, tumor suppressor mediated growth arrest and replicative senescence, apoptosis, and DNA repair. The NuA4 complex ATPase and helicase activities seem to be, at least in part, contributed by the association of RUVBL1 and RUVBL2 with EP400. NuA4 may also play a direct role in DNA repair when recruited to sites of DNA damage. Component of a SWR1-like complex that specifically mediates the removal of histone H2A.Z/H2AZ1 from the nucleosome. Proposed core component of the chromatin remodeling INO80 complex which exhibits DNA- and nucleosome-activated ATPase activity and catalyzes ATP-dependent nucleosome sliding. Plays an essential role in oncogenic transformation by MYC and also modulates transcriptional activation by the LEF1/TCF1-CTNNB1 complex. Essential for cell proliferation. May be able to bind plasminogen at cell surface and enhance plasminogen activation. This is RuvB-like 1 from Homo sapiens (Human).